The following is a 599-amino-acid chain: Aspartate--tRNA(Asp/Asn) ligase (599 aa).

Glu172 is an L-aspartate binding site. The aspartate stretch occupies residues 196–199 (QLFK). Position 218 (Arg218) interacts with L-aspartate. ATP contacts are provided by residues 218-220 (RDE) and Gln227. His451 contacts L-aspartate. Residue Glu485 participates in ATP binding. Position 492 (Arg492) interacts with L-aspartate. 537-540 (GLDR) contributes to the ATP binding site.

It belongs to the class-II aminoacyl-tRNA synthetase family. Type 1 subfamily. As to quaternary structure, homodimer.

It localises to the cytoplasm. It catalyses the reaction tRNA(Asx) + L-aspartate + ATP = L-aspartyl-tRNA(Asx) + AMP + diphosphate. Its function is as follows. Aspartyl-tRNA synthetase with relaxed tRNA specificity since it is able to aspartylate not only its cognate tRNA(Asp) but also tRNA(Asn). Reaction proceeds in two steps: L-aspartate is first activated by ATP to form Asp-AMP and then transferred to the acceptor end of tRNA(Asp/Asn). This Dechloromonas aromatica (strain RCB) protein is Aspartate--tRNA(Asp/Asn) ligase.